The following is a 93-amino-acid chain: MAYNKSDLVSKIAQKSNLTKAQAEAAVNAFQDVFVEAMKSGEGLKLTGLFSAERVKRAARTGRNPRTGEQIDIPASYGVRISAGSLLKKAVTE.

It belongs to the bacterial histone-like protein family. As to quaternary structure, homodimer.

Its function is as follows. Histone-like DNA-binding protein which is capable of wrapping DNA to stabilize it, and thus to prevent its denaturation under extreme environmental conditions. In Bifidobacterium longum (strain NCC 2705), this protein is DNA-binding protein HB1 (hup).